Reading from the N-terminus, the 204-residue chain is Copper-binding protein CutI (204 aa).

Positions 1-26 (MLKKIALTLCPAIVGSLLFFTAPASA) are cleaved as a signal peptide. Cu(2+) is bound by residues H27 and E50. Topologically, residues 27-178 (HVSVKPAESA…DDSENSGSSA (152 aa)) are extracellular. A disordered region spans residues 146 to 176 (PHSITNITSAKQVTDEHGATKTEDDSENSGS). Residues 147–157 (HSITNITSAKQ) show a composition bias toward polar residues. A compositionally biased stretch (basic and acidic residues) spans 158 to 168 (VTDEHGATKTE). A helical transmembrane segment spans residues 179–199 (LDITAMVLSAAAIILSVAALV). The Cytoplasmic segment spans residues 200–204 (KKKRA).

The protein resides in the cell membrane. Functionally, copper-binding protein that probably plays a role in copper homeostasis. May act as metallochaperone, possibly to facilitate copper uptake via the CutJ/YcnJ importer. Preferentially binds Cu in its oxidized Cu(II) state in a 1:1 stoichiometry. The protein is Copper-binding protein CutI of Bacillus subtilis (strain 168).